We begin with the raw amino-acid sequence, 37 residues long: Photosystem II reaction center protein M (37 aa).

Residues 5 to 25 form a helical membrane-spanning segment; that stretch reads ILAFIATALFILVPTAFLLII.

It belongs to the PsbM family. PSII is composed of 1 copy each of membrane proteins PsbA, PsbB, PsbC, PsbD, PsbE, PsbF, PsbH, PsbI, PsbJ, PsbK, PsbL, PsbM, PsbT, PsbX, PsbY, PsbZ, Psb30/Ycf12, at least 3 peripheral proteins of the oxygen-evolving complex and a large number of cofactors. It forms dimeric complexes.

Its subcellular location is the plastid. The protein localises to the chloroplast thylakoid membrane. In terms of biological role, one of the components of the core complex of photosystem II (PSII). PSII is a light-driven water:plastoquinone oxidoreductase that uses light energy to abstract electrons from H(2)O, generating O(2) and a proton gradient subsequently used for ATP formation. It consists of a core antenna complex that captures photons, and an electron transfer chain that converts photonic excitation into a charge separation. This subunit is found at the monomer-monomer interface. The chain is Photosystem II reaction center protein M from Pelargonium hortorum (Common geranium).